The sequence spans 179 residues: Translation initiation factor IF-3 (179 aa).

It belongs to the IF-3 family. Monomer.

It localises to the cytoplasm. In terms of biological role, IF-3 binds to the 30S ribosomal subunit and shifts the equilibrium between 70S ribosomes and their 50S and 30S subunits in favor of the free subunits, thus enhancing the availability of 30S subunits on which protein synthesis initiation begins. The sequence is that of Translation initiation factor IF-3 from Leptospira borgpetersenii serovar Hardjo-bovis (strain L550).